We begin with the raw amino-acid sequence, 151 residues long: Deoxyuridine 5'-triphosphate nucleotidohydrolase (151 aa).

Substrate contacts are provided by residues 70 to 72 (RSG), Asn83, 87 to 89 (LID), and Met97.

It belongs to the dUTPase family. Requires Mg(2+) as cofactor.

The enzyme catalyses dUTP + H2O = dUMP + diphosphate + H(+). Its pathway is pyrimidine metabolism; dUMP biosynthesis; dUMP from dCTP (dUTP route): step 2/2. In terms of biological role, this enzyme is involved in nucleotide metabolism: it produces dUMP, the immediate precursor of thymidine nucleotides and it decreases the intracellular concentration of dUTP so that uracil cannot be incorporated into DNA. The chain is Deoxyuridine 5'-triphosphate nucleotidohydrolase from Tolumonas auensis (strain DSM 9187 / NBRC 110442 / TA 4).